We begin with the raw amino-acid sequence, 436 residues long: 3-ketoacyl-CoA thiolase (436 aa).

The active-site Acyl-thioester intermediate is C99. Residues H392 and C422 each act as proton acceptor in the active site.

Belongs to the thiolase-like superfamily. Thiolase family. In terms of assembly, heterotetramer of two alpha chains (FadJ) and two beta chains (FadI).

It is found in the cytoplasm. It catalyses the reaction an acyl-CoA + acetyl-CoA = a 3-oxoacyl-CoA + CoA. It functions in the pathway lipid metabolism; fatty acid beta-oxidation. Its function is as follows. Catalyzes the final step of fatty acid oxidation in which acetyl-CoA is released and the CoA ester of a fatty acid two carbons shorter is formed. The protein is 3-ketoacyl-CoA thiolase of Shigella boydii serotype 4 (strain Sb227).